A 109-amino-acid polypeptide reads, in one-letter code: MSRRPNFGGMGMGNMQGLIKQAKKMQQQMEAEQANLATQEFVGKSADDMVVATFSGDRQLKDLKIDKEAIDPDDPDMLQDLVIDAVNKGIKAVDDATQASMGKYTKGLM.

Belongs to the YbaB/EbfC family. Homodimer.

It localises to the cytoplasm. It is found in the nucleoid. Binds to DNA and alters its conformation. May be involved in regulation of gene expression, nucleoid organization and DNA protection. The chain is Nucleoid-associated protein LGAS_0369 from Lactobacillus gasseri (strain ATCC 33323 / DSM 20243 / BCRC 14619 / CIP 102991 / JCM 1131 / KCTC 3163 / NCIMB 11718 / NCTC 13722 / AM63).